A 165-amino-acid chain; its full sequence is MAKMSLSSYLLILTFSLFSQGILLSASKSIRNLEDDMVFNTFRLGKALQKEDTPQKSVVAPSLEQYKNDDSSFMNDEENKNSKNTGSKHNFLNHGLPLNLAIKPYLALKGSVAFPAENGVQNTESTQEKREIGDEENSAKFPIGRRDFDMLRCMLGRVYRPCWQV.

An N-terminal signal peptide occupies residues 1–21 (MAKMSLSSYLLILTFSLFSQG). Residues 68-88 (NDDSSFMNDEENKNSKNTGSK) are disordered. The residue at position 143 (Ile-143) is an Isoleucine amide. Cys-153 and Cys-162 form a disulfide bridge.

This sequence belongs to the melanin-concentrating hormone family. In terms of processing, pro-MCH is processed differentially in the brain and in peripheral organs producing two neuropeptides; NEI and MCH. A third peptide, NGE, may also be produced. Preferential processing in neurons by prohormone convertase 2 (PC2) generates NEI. MCH is generated in neurons of the lateral hypothalmic area by several prohormone convertases including PC1/3, PC2 and PC5/6.

Its subcellular location is the secreted. Functionally, MCH may act as a neurotransmitter or neuromodulator in a broad array of neuronal functions directed toward the regulation of goal-directed behavior, such as food intake, and general arousal. This is Pro-MCH (PMCH) from Canis lupus familiaris (Dog).